Here is a 328-residue protein sequence, read N- to C-terminus: Dolichyl-diphosphooligosaccharide--protein glycosyltransferase subunit MAGT1 (328 aa).

The signal sequence occupies residues 1-22 (MLHKLLIVVFLVVCLHDMRLNG). The Extracellular portion of the chain corresponds to 23–177 (QKKKETLLSE…DVHIRVIRPP (155 aa)). Residues 40–168 (WVSKRAVVRL…LARWVADRTD (129 aa)) form the Thioredoxin domain. N-linked (GlcNAc...) asparagine glycosylation is present at asparagine 64. Cysteine 80 and cysteine 83 are joined by a disulfide. Residues 178-198 (NYAGPLMLGLLLAFIGSLAYL) form a helical membrane-spanning segment. The Cytoplasmic portion of the chain corresponds to 199-202 (RRNN). The helical transmembrane segment at 203 to 223 (LEFLFNKNVWAFSALCFVLIM) threads the bilayer. The Extracellular portion of the chain corresponds to 224–257 (TSGQMWNHIRGPPYAHKNPNTGQVSYIHGSSQAQ). The chain crosses the membrane as a helical span at residues 258-278 (FVAETHIVLLFNAAVTIGMVL). At 279–293 (LHEAATSGLDIVKRK) the chain is on the cytoplasmic side. A helical transmembrane segment spans residues 294 to 314 (IMCVAGIGLVVLFFSWLLSVF). Topologically, residues 315–328 (RAKYHGYPYSFLFG) are extracellular.

Belongs to the OST3/OST6 family. In terms of assembly, accessory component of the STT3B-containing form of the oligosaccharyltransferase (OST) complex.

It localises to the cell membrane. Its subcellular location is the endoplasmic reticulum. It is found in the endoplasmic reticulum membrane. The protein operates within protein modification; protein glycosylation. Functionally, accessory component of the STT3B-containing form of the N-oligosaccharyl transferase (OST) complex which catalyzes the transfer of a high mannose oligosaccharide from a lipid-linked oligosaccharide donor to an asparagine residue within an Asn-X-Ser/Thr consensus motif in nascent polypeptide chains. Involved in N-glycosylation of STT3B-dependent substrates. Specifically required for the glycosylation of a subset of acceptor sites that are near cysteine residues; in this function seems to act redundantly with TUSC3. In its oxidized form proposed to form transient mixed disulfides with a glycoprotein substrate to facilitate access of STT3B to the unmodified acceptor site. Also has oxidoreductase-independent functions in the STT3B-containing OST complex possibly involving substrate recognition. Could indirectly play a role in Mg(2+) transport. The polypeptide is Dolichyl-diphosphooligosaccharide--protein glycosyltransferase subunit MAGT1 (Danio rerio (Zebrafish)).